Here is a 398-residue protein sequence, read N- to C-terminus: Fe-regulated protein 8 (398 aa).

Protein of unknown function; part of the gene cluster that mediates the biosynthesis of siderophore ferrichrome A which is contributing to organismal virulence. This is Fe-regulated protein 8 from Mycosarcoma maydis (Corn smut fungus).